The following is a 137-amino-acid chain: Small ribosomal subunit protein uS12 (137 aa).

The tract at residues 1–57 (MPTINQLVRKPRQSKIKKSDSPALNKGFNSKKKKFTDLNSPQKRGVCTRVGTMTPRK) is disordered. A 3-methylthioaspartic acid modification is found at D102. Positions 118–137 (SGVDGRRQGRSLYGTKKPKN) are disordered.

The protein belongs to the universal ribosomal protein uS12 family. Part of the 30S ribosomal subunit. Contacts proteins S8 and S17. May interact with IF1 in the 30S initiation complex.

Its function is as follows. With S4 and S5 plays an important role in translational accuracy. Interacts with and stabilizes bases of the 16S rRNA that are involved in tRNA selection in the A site and with the mRNA backbone. Located at the interface of the 30S and 50S subunits, it traverses the body of the 30S subunit contacting proteins on the other side and probably holding the rRNA structure together. The combined cluster of proteins S8, S12 and S17 appears to hold together the shoulder and platform of the 30S subunit. This Staphylococcus aureus (strain COL) protein is Small ribosomal subunit protein uS12.